Consider the following 66-residue polypeptide: MSDVDDTIVDSIAIVGAILIGIFLIVVSVSNTSLFNNTEYDSMINSVLVIISSVIAYTLGKRRSKS.

Over 1-6 (MSDVDD) the chain is Cytoplasmic. A helical membrane pass occupies residues 7-27 (TIVDSIAIVGAILIGIFLIVV). The Extracellular segment spans residues 28–39 (SVSNTSLFNNTE). The helical transmembrane segment at 40-60 (YDSMINSVLVIISSVIAYTLG) threads the bilayer. Residues 61-66 (KRRSKS) are Cytoplasmic-facing.

The protein resides in the host membrane. The polypeptide is Putative transmembrane protein ORF66 (Acidianus filamentous virus 2 (isolate Italy/Pozzuoli) (AFV-2)).